We begin with the raw amino-acid sequence, 362 residues long: tRNA-specific 2-thiouridylase MnmA (362 aa).

ATP is bound by residues 9-16 and Met-35; that span reads GMSGGVDS. The interaction with target base in tRNA stretch occupies residues 95-97; that stretch reads NPD. Residue Cys-100 is the Nucleophile of the active site. Cys-100 and Cys-196 are oxidised to a cystine. Gly-124 serves as a coordination point for ATP. The interval 146 to 148 is interaction with tRNA; sequence KDQ. The active-site Cysteine persulfide intermediate is Cys-196. Residues 308 to 309 form an interaction with tRNA region; it reads RY.

Belongs to the MnmA/TRMU family.

The protein localises to the cytoplasm. The catalysed reaction is S-sulfanyl-L-cysteinyl-[protein] + uridine(34) in tRNA + AH2 + ATP = 2-thiouridine(34) in tRNA + L-cysteinyl-[protein] + A + AMP + diphosphate + H(+). Catalyzes the 2-thiolation of uridine at the wobble position (U34) of tRNA, leading to the formation of s(2)U34. In Nitrosomonas europaea (strain ATCC 19718 / CIP 103999 / KCTC 2705 / NBRC 14298), this protein is tRNA-specific 2-thiouridylase MnmA.